A 785-amino-acid polypeptide reads, in one-letter code: Endonuclease MutS2 (785 aa).

335–342 (GPNTGGKT) is an ATP binding site. The region spanning 710-785 (LDLRGERYED…GNGVTIVEFK (76 aa)) is the Smr domain.

It belongs to the DNA mismatch repair MutS family. MutS2 subfamily. Homodimer. Binds to stalled ribosomes, contacting rRNA.

Endonuclease that is involved in the suppression of homologous recombination and thus may have a key role in the control of bacterial genetic diversity. Functionally, acts as a ribosome collision sensor, splitting the ribosome into its 2 subunits. Detects stalled/collided 70S ribosomes which it binds and splits by an ATP-hydrolysis driven conformational change. Acts upstream of the ribosome quality control system (RQC), a ribosome-associated complex that mediates the extraction of incompletely synthesized nascent chains from stalled ribosomes and their subsequent degradation. Probably generates substrates for RQC. The chain is Endonuclease MutS2 from Listeria welshimeri serovar 6b (strain ATCC 35897 / DSM 20650 / CCUG 15529 / CIP 8149 / NCTC 11857 / SLCC 5334 / V8).